The primary structure comprises 320 residues: Taste receptor type 2 member 109 (320 aa).

Over 1 to 14 (MEHFLKSIFDISKN) the chain is Extracellular. Residues 15-35 (VLPIILFIELIIGIIGNGFMA) traverse the membrane as a helical segment. The Cytoplasmic portion of the chain corresponds to 36–62 (LVHCMDWVKRKKMSLVNQILTTLATSR). The helical transmembrane segment at 63 to 83 (ICLLWFMLLGLLITLLDPDLA) threads the bilayer. Residues 84–94 (SARMMIQVASN) lie on the Extracellular side of the membrane. Residues 95–115 (LWIIANHMSIWLATCLTVFYF) form a helical membrane-spanning segment. Residues 116-135 (LKIANFSSSLFLYLKWRVEK) are Cytoplasmic-facing. The chain crosses the membrane as a helical span at residues 136-156 (VISVIFLVSLVLLFLNMLLMN). The Extracellular portion of the chain corresponds to 157 to 191 (LENDMCIAEYHQINISYSFIYHYRADCERRVLRLH). Asn-170 carries an N-linked (GlcNAc...) asparagine glycan. A helical transmembrane segment spans residues 192 to 212 (IIILSVPFVLSLPTFLLLIFS). The Cytoplasmic segment spans residues 213-240 (LWTHHKKMQQHVQGRRDASTTAHFKALQ). A helical membrane pass occupies residues 241–261 (TVIAFLLLYCIFILSMLLQFW). Residues 262-270 (KYELMKKPL) lie on the Extracellular side of the membrane. A helical membrane pass occupies residues 271 to 291 (FILFCHIVYGAFPSFHSYVLI). Residues 292 to 320 (LGDMKLRQASLSVLLWLKCRPNYIETLDL) are Cytoplasmic-facing.

The protein belongs to the G-protein coupled receptor T2R family.

It is found in the membrane. Putative taste receptor which may play a role in the perception of bitterness. This chain is Taste receptor type 2 member 109, found in Rattus norvegicus (Rat).